Consider the following 339-residue polypeptide: Lipopolysaccharide 1,2-glucosyltransferase (339 aa).

UDP-binding positions include 35 to 40 (GIDENY) and 132 to 133 (DA). Mg(2+)-binding residues include aspartate 132 and aspartate 134. 2 consecutive short sequence motifs (DXD) follow at residues 132 to 134 (DAD) and 219 to 221 (DQD). Histidine 268 contributes to the Mg(2+) binding site. UDP is bound at residue 268 to 274 (HYTGITK).

This sequence belongs to the glycosyltransferase 8 family. It depends on Mg(2+) as a cofactor.

It localises to the cell inner membrane. The catalysed reaction is UDP-glucose + [lipopolysaccharide] = UDP + D-glucosyl-[lipopolysaccharide].. Its pathway is bacterial outer membrane biogenesis; LPS core biosynthesis. Functionally, glucosyltransferase involved in the biosynthesis of the core oligosaccharide region of lipopolysaccharide (LPS). Catalyzes the addition of a glucose (glucose II) to the outer-core galactose I. Has a marked preference for its specific donor substrate, but it appears to have a relaxed specificity for alternate LPS acceptor residues, providing the overall size of the acceptor is conserved. The polypeptide is Lipopolysaccharide 1,2-glucosyltransferase (Escherichia coli).